Consider the following 1040-residue polypeptide: MSEQERIQDCLRKEIRSLLISTKDGLTPQQLEKEYLLMVGNHLPLRILGYRSTMELVLDMPDVVSVCPGGDGTVILKAIPDESTKGIASLVAKQRRSHKVRNSMPKGRPSICSGRVPYRGRVPPILPAVVKSELKDLLALSPVLLSDFEKAFARRFGRSFQYMQYGFLSMFEVLNAASDVISVEQTRAGSLLTLKKSVSEDKQRGWPAGKVFTQPFRMKQQGSYSTGFPVMKAHFSQPISNMEPPKQVLSMAKTPTFNSVEASRLNHTEKLNQLESTFKSVIAQIGPGGTVDPELKRKIQFVVSKFPQGLFISKLLGEFELTFKEQLSPKQLGFLNVTELVGALSDILRVEFSEERQDLLVFDADLKPLPSGGPLSSVRNSCLVQPDKKTEANPWTSSLSRNSLSTVAVKKTTWDCPLKNQKEPEQKIYKKPNLVVKPLQLQVETNKPQLSLSVANHDIPPDAVRAKKLCRLPPLDTSTLVGVFVEYIISPSQFYIRIYSRDSSELLEDMMIEMRRCYSNQLVSDRYIMPEYFIQPGHLCCVKISEDKWWYRVIIHRILGKKEVEVFYPDFGNIGTVQKSSLRFLKCCYTKLPAQAIPCSLAWVRPAEEHWTARAILHFQKLCGLKPLVGVVDEYIDGILNIFLCDTSSNEDVYFHHVLRTEGHAIVCRENAPSKGFRDFNPPALYTNASSAGDMVLTDLGHPAQQHYLNEDQEILQQAQQDINDGKCISYLKSAPKELLKDSKLSSLKTHKSCEEDPRWSILQPKDLKEENEDEVPTGMPCLESVTIGDDVWDENWLPLQAKMGKAGSPASQLFTSNLVGKKQYQTGGEMAQKDWCFSTSKDIWDDSWQPLGLANDVKGGIHTPEGPIAQEKNTSTTRIQQQPDLQYPLDSSTLPKLEEFYISLIKSQQSAERSQSEPASIQTHAGRAASKALSSTPAVGDSPENHSGSVESSPGSLKKEDVSNSRAEATAKDKSQGAIDQLSFILSPQHQISQKLYIPRSTATAVLGAAARLATSRSLLHWYPSVKGGKLEAERDGVK.

3 HTH OST-type domains span residues 7–80, 122–197, and 291–365; these read IQDC…KAIP, VPPI…LKKS, and VDPE…FDAD. In terms of domain architecture, Tudor spans 533–592; the sequence is FIQPGHLCCVKISEDKWWYRVIIHRILGKKEVEVFYPDFGNIGTVQKSSLRFLKCCYTKL. Phosphoserine is present on S809. Disordered regions lie at residues 857-891 and 912-975; these read DVKG…YPLD and AERS…AKDK. Composition is skewed to polar residues over residues 872–891 and 912–924; these read EKNT…YPLD and AERS…SIQT. S943 carries the post-translational modification Phosphoserine. The span at 946–956 shows a compositional bias: polar residues; it reads NHSGSVESSPG. The segment covering 958-975 has biased composition (basic and acidic residues); that stretch reads LKKEDVSNSRAEATAKDK.

It belongs to the TDRD5 family. Gonad-specific. Mainly expressed in testis. Present at low level in ovary (at protein level).

Its subcellular location is the cytoplasm. Its function is as follows. Required during spermiogenesis to participate in the repression transposable elements and prevent their mobilization, which is essential for the germline integrity. Probably acts via the piRNA metabolic process, which mediates the repression of transposable elements during meiosis by forming complexes composed of piRNAs and Piwi proteins and govern the methylation and subsequent repression of transposons. Required for chromatoid body (CB) assembly. The protein is Tudor domain-containing protein 5 (Tdrd5) of Mus musculus (Mouse).